The sequence spans 644 residues: Interleukin-23 receptor (644 aa).

The first 23 residues, 1 to 23 (MSHLTLQLHVVIALYVLFRWCHG), serve as a signal peptide directing secretion. At 24–374 (GITSINCSGD…PASGNHQDIG (351 aa)) the chain is on the extracellular side. 3 N-linked (GlcNAc...) asparagine glycosylation sites follow: asparagine 47, asparagine 130, and asparagine 232. Fibronectin type-III domains follow at residues 127 to 217 (APSN…LDDI) and 219 to 318 (IPSA…TSQE). The helical transmembrane segment at 375–395 (LLSGMVFLAIMLPIFSLIGIF) threads the bilayer. The Cytoplasmic segment spans residues 396-644 (NRSLRIGIKR…HFSRISLFQK (249 aa)).

The protein belongs to the type I cytokine receptor family. Type 2 subfamily. Heterodimer with IL12RB1. In presence of IL23, the heterodimer forms the IL23 receptor. Interacts with JAK2 and in presence of IL23 with STAT3. Phosphorylated in response to IL23. Expressed by Th1, Th2 and dendritic cells.

Its subcellular location is the cell membrane. Functionally, associates with IL12RB1 to form the interleukin-23 receptor. Binds IL23 and mediates T-cells, NK cells and possibly certain macrophage/myeloid cells stimulation probably through activation of the Jak-Stat signaling cascade. IL23 functions in innate and adaptive immunity and may participate in acute response to infection in peripheral tissues. IL23 may be responsible for autoimmune inflammatory diseases and be important for tumorigenesis. The sequence is that of Interleukin-23 receptor (Il23r) from Mus musculus (Mouse).